The following is a 1079-amino-acid chain: Translation initiation factor IF-2 (1079 aa).

3 stretches are compositionally biased toward basic and acidic residues: residues 52–65 (VQAQ…KEGN), 75–90 (RDGD…KAPE), and 102–134 (APER…KEPQ). A disordered region spans residues 52 to 488 (VQAQRDGGAR…RGKKDVRPAA (437 aa)). The segment covering 150–184 (APVAKVVEAAPAETPAPEAPAVKATVTAEAAPAKT) has biased composition (low complexity). Residues 185–194 (VEPESERPQA) are compositionally biased toward basic and acidic residues. The span at 276–291 (AAVAQQQMQQQAAQQQ) shows a compositional bias: low complexity. The segment covering 306-327 (GGYRPEGQREGGYRPEGQREGG) has biased composition (basic and acidic residues). Composition is skewed to low complexity over residues 348–370 (EGGY…GPRP) and 380–398 (PGAP…APRP). Residues 419–429 (PRPGGFGGAPG) show a composition bias toward gly residues. The segment covering 461 to 471 (PRGRSDDDVMR) has biased composition (basic and acidic residues). A compositionally biased stretch (basic residues) spans 473–482 (PRGRGKRGKK). Residues 578–745 (TRPPVVTIMG…LIAIQAEILE (168 aa)) form the tr-type G domain. A G1 region spans residues 587–594 (GHVDHGKT). 587 to 594 (GHVDHGKT) is a GTP binding site. The interval 612–616 (GITQH) is G2. The interval 633–636 (DTPG) is G3. Residues 633-637 (DTPGH) and 687-690 (NKMD) each bind GTP. The tract at residues 687–690 (NKMD) is G4. Positions 723-725 (SAK) are G5.

Belongs to the TRAFAC class translation factor GTPase superfamily. Classic translation factor GTPase family. IF-2 subfamily.

It localises to the cytoplasm. Its function is as follows. One of the essential components for the initiation of protein synthesis. Protects formylmethionyl-tRNA from spontaneous hydrolysis and promotes its binding to the 30S ribosomal subunits. Also involved in the hydrolysis of GTP during the formation of the 70S ribosomal complex. This is Translation initiation factor IF-2 from Nitratidesulfovibrio vulgaris (strain DP4) (Desulfovibrio vulgaris).